The sequence spans 89 residues: Probable Fe(2+)-trafficking protein (89 aa).

Belongs to the Fe(2+)-trafficking protein family.

Its function is as follows. Could be a mediator in iron transactions between iron acquisition and iron-requiring processes, such as synthesis and/or repair of Fe-S clusters in biosynthetic enzymes. This Legionella pneumophila (strain Lens) protein is Probable Fe(2+)-trafficking protein.